The following is a 462-amino-acid chain: Glycoprotein endo-alpha-1,2-mannosidase (462 aa).

At 1 to 8 (MAKFRRRT) the chain is on the cytoplasmic side. The helical; Signal-anchor for type II membrane protein transmembrane segment at 9–29 (CIILALFILFIFSLMMGLKML) threads the bilayer. Residues 30-462 (RPNTATFGAP…YALDRQLPVS (433 aa)) lie on the Lumenal side of the membrane. The interval 60-462 (DFQKSDRINS…YALDRQLPVS (403 aa)) is catalytic.

It belongs to the glycosyl hydrolase 99 family. Post-translationally, undergoes proteolytic cleavage in the C-terminal region. As to expression, highly expressed in the liver and kidney. Expressed at lower levels in muscle, pancreas, heart, placenta, lung and brain.

It is found in the golgi apparatus membrane. It catalyses the reaction N-{alpha-Glc-(1-&gt;3)-alpha-Man-(1-&gt;2)-alpha-Man-(1-&gt;2)-alpha-Man-(1-&gt;3)-[alpha-Man-(1-&gt;2)-alpha-Man-(1-&gt;3)-[alpha-Man-(1-&gt;2)-alpha-Man-(1-&gt;6)]-alpha-Man-(1-&gt;6)]-beta-Man-(1-&gt;4)-beta-GlcNAc-(1-&gt;4)-beta-GlcNAc}-L-asparaginyl-[protein] + H2O = alpha-D-glucosyl-(1-&gt;3)-D-mannopyranose + N(4)-{alpha-D-Man-(1-&gt;2)-alpha-D-Man-(1-&gt;3)-[alpha-D-Man-(1-&gt;2)-alpha-D-Man-(1-&gt;3)-[alpha-D-Man-(1-&gt;2)-alpha-D-Man-(1-&gt;6)]-alpha-D-Man-(1-&gt;6)]-beta-D-Man-(1-&gt;4)-beta-D-GlaNAc-(1-&gt;4)-beta-D-GlcNAc}-L-asparaginyl-[protein] (N-glucan mannose isomer 8A1,2,3B1,2). The polypeptide is Glycoprotein endo-alpha-1,2-mannosidase (MANEA) (Homo sapiens (Human)).